Consider the following 474-residue polypeptide: tRNA modification GTPase MnmE (474 aa).

Residues R23, E86, and K125 each coordinate (6S)-5-formyl-5,6,7,8-tetrahydrofolate. A TrmE-type G domain is found at 221 to 396 (GIPVAIVGEP…LKEKLLEYVN (176 aa)). N231 contributes to the K(+) binding site. GTP is bound by residues 231 to 236 (NVGKST), 250 to 256 (SEIAGTT), and 275 to 278 (DTAG). S235 is a Mg(2+) binding site. 3 residues coordinate K(+): S250, I252, and T255. T256 provides a ligand contact to Mg(2+). K474 contributes to the (6S)-5-formyl-5,6,7,8-tetrahydrofolate binding site.

The protein belongs to the TRAFAC class TrmE-Era-EngA-EngB-Septin-like GTPase superfamily. TrmE GTPase family. Homodimer. Heterotetramer of two MnmE and two MnmG subunits. Requires K(+) as cofactor.

It is found in the cytoplasm. Functionally, exhibits a very high intrinsic GTPase hydrolysis rate. Involved in the addition of a carboxymethylaminomethyl (cmnm) group at the wobble position (U34) of certain tRNAs, forming tRNA-cmnm(5)s(2)U34. In Christiangramia forsetii (strain DSM 17595 / CGMCC 1.15422 / KT0803) (Gramella forsetii), this protein is tRNA modification GTPase MnmE.